Here is a 347-residue protein sequence, read N- to C-terminus: Protein RecA (347 aa).

Residue 67 to 74 (GPESSGKT) coordinates ATP.

The protein belongs to the RecA family.

The protein resides in the cytoplasm. In terms of biological role, can catalyze the hydrolysis of ATP in the presence of single-stranded DNA, the ATP-dependent uptake of single-stranded DNA by duplex DNA, and the ATP-dependent hybridization of homologous single-stranded DNAs. It interacts with LexA causing its activation and leading to its autocatalytic cleavage. The chain is Protein RecA from Helicobacter pylori (strain HPAG1).